Reading from the N-terminus, the 350-residue chain is Nuclear pore complex-interacting protein family member A3 (350 aa).

The tract at residues 306–325 (KTPPECLLTPLPPSAPPSVD) is disordered.

It belongs to the NPIP family.

This Homo sapiens (Human) protein is Nuclear pore complex-interacting protein family member A3 (NPIPA3).